A 550-amino-acid polypeptide reads, in one-letter code: Hydroxylamine reductase (550 aa).

Residues Cys-3, Cys-6, Cys-18, and Cys-25 each contribute to the [2Fe-2S] cluster site. Positions 249, 273, 317, 405, 433, 458, 492, and 494 each coordinate hybrid [4Fe-2O-2S] cluster. At Cys-405 the chain carries Cysteine persulfide.

The protein belongs to the HCP family. [2Fe-2S] cluster serves as cofactor. Requires hybrid [4Fe-2O-2S] cluster as cofactor.

Its subcellular location is the cytoplasm. It carries out the reaction A + NH4(+) + H2O = hydroxylamine + AH2 + H(+). In terms of biological role, catalyzes the reduction of hydroxylamine to form NH(3) and H(2)O. The chain is Hydroxylamine reductase from Salmonella typhi.